Consider the following 398-residue polypeptide: Lymphocyte transmembrane adapter 1 (398 aa).

Residues 1–37 lie on the Extracellular side of the membrane; it reads MDGVTPTLSTIRGRTLESSTLHVTPRSLDRNKDQITN. Residues 38-58 form a helical; Signal-anchor for type III membrane protein membrane-spanning segment; that stretch reads IFSGFAGLLAILLVVAVFCIL. The Cytoplasmic segment spans residues 59–398; that stretch reads WNWNKRKKRQ…GPGTQLLPDE (340 aa). At Tyr-193 the chain carries Phosphotyrosine. The disordered stretch occupies residues 228–261; the sequence is TEERDEGCGDAGDCTSLYSPGAEDSDSLSNGEGS. Phosphotyrosine is present on residues Tyr-268 and Tyr-294. A disordered region spans residues 298–330; that stretch reads PAADPSGSQQQAEKDVPSSNIGHVEDKTDDPGT. Residues 303-318 show a composition bias toward polar residues; the sequence is SGSQQQAEKDVPSSNI. Over residues 320–329 the composition is skewed to basic and acidic residues; the sequence is HVEDKTDDPG. Phosphotyrosine occurs at positions 345 and 373. The interval 347–398 is disordered; sequence DFQPFTQSEDSQMKHREEMSNEDSSDYENVLTAKLGGRDSEQGPGTQLLPDE.

When phosphorylated, interacts with GRB2, PIK3R1 and GRAP2. In terms of processing, phosphorylated on tyrosines by Syk, Lck or ZAP70 upon TCR or BCR activation; which leads to the recruitment of GRB2, PIK3R1 and GRAP2. Expressed in spleen, thymus, and peripheral blood leukocytes. Expressed in several B-, T-, NK and monocyte cell lines.

It is found in the cell membrane. Negatively regulates TCR (T-cell antigen receptor)-mediated signaling in T-cells and BCR (B-cell antigen receptor)-mediated signaling in B-cells. In Homo sapiens (Human), this protein is Lymphocyte transmembrane adapter 1 (LAX1).